The following is a 216-amino-acid chain: Protein-L-isoaspartate O-methyltransferase (216 aa).

The active site involves Ser-66.

Belongs to the methyltransferase superfamily. L-isoaspartyl/D-aspartyl protein methyltransferase family.

It is found in the cytoplasm. The enzyme catalyses [protein]-L-isoaspartate + S-adenosyl-L-methionine = [protein]-L-isoaspartate alpha-methyl ester + S-adenosyl-L-homocysteine. Catalyzes the methyl esterification of L-isoaspartyl residues in peptides and proteins that result from spontaneous decomposition of normal L-aspartyl and L-asparaginyl residues. It plays a role in the repair and/or degradation of damaged proteins. This is Protein-L-isoaspartate O-methyltransferase from Dechloromonas aromatica (strain RCB).